Here is a 614-residue protein sequence, read N- to C-terminus: Polyamine transporter 2 (614 aa).

The tract at residues 1 to 40 (MSDQESVVSFNSQNTSMVDVEGQQPQQYVPSKTNSRANQL) is disordered. At 1 to 173 (MSDQESVVSF…WPSWVRWSYT (173 aa)) the chain is on the cytoplasmic side. The residue at position 50 (Ser50) is a Phosphoserine. The span at 99 to 122 (RTASALSRTRTKQLNRTATNSSST) shows a compositional bias: polar residues. Residues 99–144 (RTASALSRTRTKQLNRTATNSSSTGKEEMEEEETEEREDQSGENEL) are disordered. The segment covering 126 to 144 (EMEEEETEEREDQSGENEL) has biased composition (acidic residues). Residues 174-194 (VLLSILVICVAYGSACISGGL) traverse the membrane as a helical segment. Residues 195 to 206 (GTVEKKYHVGME) lie on the Extracellular side of the membrane. The chain crosses the membrane as a helical span at residues 207 to 227 (AAILSCSLMVIGFSLGPLIWS). Topologically, residues 228-236 (PVSDLYGRR) are cytoplasmic. A helical transmembrane segment spans residues 237-257 (VAYFVSMGLYVIFNIPCALAP). Residues 258 to 266 (NLGCLLACR) lie on the Extracellular side of the membrane. Residues 267–287 (FLCGVWSSSGLCLVGGSIADM) traverse the membrane as a helical segment. Topologically, residues 288 to 297 (FPSETRGKAI) are cytoplasmic. Residues 298 to 318 (AFFAFAPYVGPVVGPLVNGFI) form a helical membrane-spanning segment. The Extracellular portion of the chain corresponds to 319–326 (SVSTGRMD). Residues 327-347 (LIFWVNMAFAGVMWIISSAIP) form a helical membrane-spanning segment. Over 348–407 (ETYAPVILKRKAARLRKETGNPKIMTEQEAQGVSMSEMMRACLLRPLYFAVTEPVLVATC) the chain is Cytoplasmic. Residues 408-428 (FYVCLIYSLLYAFFFAFPVIF) traverse the membrane as a helical segment. The Extracellular portion of the chain corresponds to 429–437 (GELYGYKDN). A helical membrane pass occupies residues 438–458 (LVGLMFIPIVIGALWALATTF). Topologically, residues 459 to 478 (YCENKYLQIVKQRKPTPEDR) are cytoplasmic. A helical transmembrane segment spans residues 479–499 (LLGAKIGAPFAAIALWILGAT). The Extracellular portion of the chain corresponds to 500-503 (AYKH). The helical transmembrane segment at 504–524 (IIWVGPASAGLAFGFGMVLIY) threads the bilayer. Residues 525-541 (YSLNNYIIDCYVQYASS) are Cytoplasmic-facing. A helical transmembrane segment spans residues 542 to 562 (ALATKVFLRSAGGAAFPLFTI). Residues 563-574 (QMYHKLNLHWGS) lie on the Extracellular side of the membrane. The chain crosses the membrane as a helical span at residues 575 to 595 (WLLAFISTAMIALPFAFSYWG). The Cytoplasmic portion of the chain corresponds to 596–614 (KGLRHKLSKKDYSIDSVEM).

The protein belongs to the major facilitator superfamily. DHA1 family. Polyamines/proton antiporter (TC 2.A.1.2.16) subfamily.

It localises to the cell membrane. In terms of biological role, cell membrane polyamine/proton antiporter, involved in the detoxification of excess polyamines in the cytoplasm. Recognizes spermine, but not spermidine. The protein is Polyamine transporter 2 (TPO2) of Saccharomyces cerevisiae (strain ATCC 204508 / S288c) (Baker's yeast).